Consider the following 118-residue polypeptide: Small ribosomal subunit protein uS13 (118 aa).

The tract at residues Ser94–Lys118 is disordered.

The protein belongs to the universal ribosomal protein uS13 family. In terms of assembly, part of the 30S ribosomal subunit. Forms a loose heterodimer with protein S19. Forms two bridges to the 50S subunit in the 70S ribosome.

Located at the top of the head of the 30S subunit, it contacts several helices of the 16S rRNA. In the 70S ribosome it contacts the 23S rRNA (bridge B1a) and protein L5 of the 50S subunit (bridge B1b), connecting the 2 subunits; these bridges are implicated in subunit movement. Contacts the tRNAs in the A and P-sites. This chain is Small ribosomal subunit protein uS13, found in Shewanella violacea (strain JCM 10179 / CIP 106290 / LMG 19151 / DSS12).